Here is a 342-residue protein sequence, read N- to C-terminus: Endoplasmic reticulum junction formation protein lunapark-1 (342 aa).

The Cytoplasmic portion of the chain corresponds to 1–39 (MGNLFSRNKSPATELERVALSIDDLKKRLQTISSSNTNT). A coiled-coil region spans residues 13–34 (TELERVALSIDDLKKRLQTISS). A helical membrane pass occupies residues 40–60 (LYYYYMSIVVILSIAMAHTWL). At 61-68 (RFEDPQKT) the chain is on the lumenal side. A helical transmembrane segment spans residues 69–89 (YVACALMLGAIGIVLAGRYVI). Over 90-342 (NGFFSWRTNR…ESKTMETEFH (253 aa)) the chain is Cytoplasmic. Positions 102–136 (QKLENAISQKTTLLDLVKETLKFKEAKEILDRYEK) form a coiled coil. Residues 161 to 191 (ADSSMFATPKQEQKRVETPTAQGPNSAMNSM) form a disordered region. Polar residues predominate over residues 179 to 191 (PTAQGPNSAMNSM). A C4-type; plays a role in ER morphology zinc finger spans residues 236–261 (CSICHTHNGMSTPAEYPYISFRCFEC). The disordered stretch occupies residues 278 to 342 (RPPMGPKGIQ…ESKTMETEFH (65 aa)). Residues 295-321 (SENTHNMMENQKPSTDLTPSASQNGSE) are compositionally biased toward polar residues. Positions 322–342 (KGSDSENEKVPESKTMETEFH) are enriched in basic and acidic residues.

This sequence belongs to the lunapark family. As to expression, expressed in cell bodies along the ventral cord around the pharynx and the tail both in larvae and adults. Also expressed in muscles and hypodermal cells.

It localises to the endoplasmic reticulum membrane. In terms of biological role, plays a role in tubular endoplasmic reticulum network formation and maintenance. May be involved in central nervous system development. Has a presynaptic role in neurotransmission. Likely to operate in synaptogenesis by regulating vesicular transport or localization. Required for correct localization of rab-3 and snb-1. The protein is Endoplasmic reticulum junction formation protein lunapark-1 (lnp-1) of Caenorhabditis elegans.